The primary structure comprises 684 residues: Signal peptide peptidase-like 2C (684 aa).

The N-terminal stretch at 1 to 21 (MACLGFLLPVGFLLLISTVAG) is a signal peptide. The Lumenal portion of the chain corresponds to 22 to 186 (GKYGVAHVVS…APPEPIIDYN (165 aa)). A PA domain is found at 83 to 163 (SPSQRPLRQT…HYADMLDILS (81 aa)). A glycan (N-linked (GlcNAc...) asparagine) is linked at Asn100. A helical membrane pass occupies residues 187–207 (MLVIFILAVGTVAAGGYWAGL). Topologically, residues 208 to 253 (TEANRLQRRRARRGGGSGGHHQLQEAAAAEGAQKEDNEDIPVDFTP) are cytoplasmic. Residues 216–242 (RRARRGGGSGGHHQLQEAAAAEGAQKE) form a disordered region. Low complexity predominate over residues 227 to 238 (HHQLQEAAAAEG). A helical transmembrane segment spans residues 254-274 (AMTGVVVTLSCSLMLLLYFFY). The Lumenal portion of the chain corresponds to 275–276 (DH). The chain crosses the membrane as a helical span at residues 277-297 (FVYVTIGIFGLGAGIGLYSCL). Topologically, residues 298-319 (SPLVCRLSLRQYQRPPHSLWAS) are cytoplasmic. Residues 320-340 (LPLPLLLLASLCATVIIFWVA) traverse the membrane as a helical segment. Over 341–346 (YRNEDR) the chain is Lumenal. The helical transmembrane segment at 347–365 (WAWLLQDTLGISYCLFVLH) threads the bilayer. Over 366 to 376 (RVRLPTLKNCS) the chain is Cytoplasmic. The chain crosses the membrane as a helical span at residues 377-397 (SFLLALLAFDVFFVFVTPFFT). Asp386 is a catalytic residue. At 398–439 (KTGESIMAQVALGPAESSSHERLPMVLKVPRLRVSALTLCSQ) the chain is on the lumenal side. A helical transmembrane segment spans residues 440–460 (PFSILGFGDIVVPGFLVAYCC). Asp448 is a catalytic residue. Over 461–472 (RFDVQVCSRQIY) the chain is Cytoplasmic. The helical transmembrane segment at 473-493 (FVACTVAYAVGLLVTFMAMVL) threads the bilayer. Topologically, residues 494-495 (MQ) are lumenal. A helical transmembrane segment spans residues 496–516 (MGQPALLYLVSSTLLTSLAVA). Residues 499–501 (PAL) carry the PAL motif. The Cytoplasmic portion of the chain corresponds to 517–684 (ACRQELSLFW…RKSMSTQAPL (168 aa)). Residues 548-614 (KQEGAADAHT…SDAHLDPNEL (67 aa)) form a disordered region. Positions 582–592 (EIVTISENEAT) are enriched in polar residues. The segment covering 594–611 (PEDRSDSSEGWSDAHLDP) has biased composition (basic and acidic residues).

This sequence belongs to the peptidase A22B family. As to quaternary structure, interacts (via active sites) with FREY; the interaction stabilizes FREY1 protein and inhibits SPPL2C proteolytic activity. In terms of processing, glycosylated. As to expression, highly expressed in testis where it is primarily localised in spermatids (at protein level).

The protein resides in the endoplasmic reticulum membrane. Sperm-specific intramembrane-cleaving aspartic protease (I-CLiP) that cleaves distinct tail-anchored proteins and SNARE proteins. In elongated spermatids, modulates intracellular Ca(2+) homeostasis by controlling PLN abundance through proteolytic cleavage. During spermatogenesis, processes SNARE proteins and impacts vesicular trafficking which supports compartmental reorganization in maturating spermatids and may play a role in formation of the acrosome. Functionally, in round spermatids, acts as a scaffold protein supporting FREY1 in IZUMO1 recruitment at the endoplasmic reticulum membrane and coordination of IZUMO1 complex assembly. Stabilizes FREY1 at the endoplasmic reticulum membrane through interaction. May recruit IZUMO1 interaction partners. This Homo sapiens (Human) protein is Signal peptide peptidase-like 2C.